The sequence spans 344 residues: Proline-rich transmembrane protein 2 (344 aa).

Disordered stretches follow at residues 1–220 and 233–265; these read MAAS…GAPP and GRAH…GGEG. Residues 1–272 are Cytoplasmic-facing; that stretch reads MAASSSEVSE…GEGTQKPRDY (272 aa). Ser28 carries the post-translational modification Phosphoserine. Residues 69–82 show a composition bias toward low complexity; the sequence is PETTETPVETPETV. 2 positions are modified to phosphothreonine: Thr74 and Thr78. Over residues 124–143 the composition is skewed to polar residues; sequence AEQQSAAPPEPTSEQALQLN. The span at 151–162 shows a compositional bias: pro residues; that stretch reads TSQPPPKPPLQA. The span at 168-178 shows a compositional bias: polar residues; it reads ENPTTEVLTES. The span at 201-211 shows a compositional bias: pro residues; the sequence is APQPHSPPSTK. Position 242 is a phosphoserine (Ser242). An Omega-N-methylarginine modification is found at Arg244. Ser252 and Ser253 each carry phosphoserine. An intramembrane region (helical) is located at residues 273 to 293; sequence IILAILSCFCPMWPVNIVAFA. Residues 294–321 are Cytoplasmic-facing; the sequence is YAVMSRNSLQQGDVDGAQRLGRVAKLLS. The chain crosses the membrane as a helical span at residues 322–342; sequence IVALVGGVLIIIASCVINLGV. Over 343–344 the chain is Extracellular; that stretch reads YK.

The protein belongs to the CD225/Dispanin family. In terms of assembly, component of the outer core of AMPAR complex. AMPAR complex consists of an inner core made of 4 pore-forming GluA/GRIA proteins (GRIA1, GRIA2, GRIA3 and GRIA4) and 4 major auxiliary subunits arranged in a twofold symmetry. One of the two pairs of distinct binding sites is occupied either by CNIH2, CNIH3 or CACNG2, CACNG3. The other harbors CACNG2, CACNG3, CACNG4, CACNG8 or GSG1L. This inner core of AMPAR complex is complemented by outer core constituents binding directly to the GluA/GRIA proteins at sites distinct from the interaction sites of the inner core constituents. Outer core constituents include at least PRRT1, PRRT2, CKAMP44/SHISA9, FRRS1L and NRN1. The proteins of the inner and outer core serve as a platform for other, more peripherally associated AMPAR constituents. Alone or in combination, these auxiliary subunits control the gating and pharmacology of the AMPAR complex and profoundly impact their biogenesis and protein processing. Interacts with intersectin 1/ITSN1. Interacts with SNARE complex components, including SNAP25, STX1A, SYT1 and SYT2; this interaction may inhibit SNARE complex formation. In terms of tissue distribution, neuron-specific expression throughout the brain, including hippocampus (at protein level).

Its subcellular location is the cell membrane. The protein localises to the presynaptic cell membrane. It localises to the synapse. It is found in the cell projection. The protein resides in the axon. Its subcellular location is the cytoplasmic vesicle. The protein localises to the secretory vesicle. It localises to the synaptic vesicle membrane. It is found in the postsynaptic density membrane. The protein resides in the dendritic spine. Its function is as follows. As a component of the outer core of AMPAR complex, may be involved in synaptic transmission in the central nervous system. In hippocampal neurons, in presynaptic terminals, plays an important role in the final steps of neurotransmitter release, possibly by regulating Ca(2+)-sensing. In the cerebellum, may inhibit SNARE complex formation and down-regulate short-term facilitation. The protein is Proline-rich transmembrane protein 2 (Prrt2) of Rattus norvegicus (Rat).